The following is a 554-amino-acid chain: Developmental and secondary metabolism regulator ve-1 (554 aa).

A Velvet domain is found at 31–230 (GRKLWYSLRV…AEQGCRVRIR (200 aa)). Positions 45-50 (LRARAC) match the Nuclear localization signal motif. Residues 166–175 (TKEDKDKDPE) show a composition bias toward basic and acidic residues. Disordered regions lie at residues 166–190 (TKED…SFDF), 232–430 (DVRM…PHRL), and 465–528 (PRAY…VDDK). Residues 276–292 (RSMSGSTERTPYSSISD) are compositionally biased toward polar residues. 2 stretches are compositionally biased toward pro residues: residues 363 to 372 (SYPPPPPPHQ) and 485 to 494 (LPPPPPPPPQ). A PEST region spans residues 455-487 (SPSNMAAPPYPRAYSVSNSGGLTSAGGYNQLPP). Over residues 500–528 (RAHDQTFRADPEMRRYQDGARERESVDDK) the composition is skewed to basic and acidic residues.

The protein belongs to the velvet family. VeA subfamily. As to quaternary structure, component of the heterotrimeric velvet complex composed of lae-1, ve-1 and vel-2; Ve-1 acting as a bridging protein between lae-1 and vel-2.

It is found in the nucleus. Its subcellular location is the cytoplasm. Component of the velvet transcription factor complex that controls sexual/asexual developmental ratio in response to light, promoting sexual development in the darkness while stimulating asexual sporulation under illumination. The velvet complex hat acts as a global regulator for secondary metabolite gene expression. The chain is Developmental and secondary metabolism regulator ve-1 from Neurospora crassa (strain ATCC 24698 / 74-OR23-1A / CBS 708.71 / DSM 1257 / FGSC 987).